The chain runs to 355 residues: Phenylalanine--tRNA ligase alpha subunit (355 aa).

Mg(2+) is bound at residue glutamate 273.

Belongs to the class-II aminoacyl-tRNA synthetase family. Phe-tRNA synthetase alpha subunit type 1 subfamily. As to quaternary structure, tetramer of two alpha and two beta subunits. Mg(2+) is required as a cofactor.

It localises to the cytoplasm. It carries out the reaction tRNA(Phe) + L-phenylalanine + ATP = L-phenylalanyl-tRNA(Phe) + AMP + diphosphate + H(+). This Bifidobacterium adolescentis (strain ATCC 15703 / DSM 20083 / NCTC 11814 / E194a) protein is Phenylalanine--tRNA ligase alpha subunit.